The chain runs to 120 residues: NAD(P)H-quinone oxidoreductase subunit 3, chloroplastic (120 aa).

A run of 3 helical transmembrane segments spans residues 9 to 29, 64 to 84, and 88 to 108; these read IFWAFLIIASLIPILAFWISA, MFALVFVVFDVETVFLYPWAM, and VLGISVFIEAFIFVLILVVGL.

The protein belongs to the complex I subunit 3 family. As to quaternary structure, NDH is composed of at least 16 different subunits, 5 of which are encoded in the nucleus.

The protein localises to the plastid. Its subcellular location is the chloroplast thylakoid membrane. It catalyses the reaction a plastoquinone + NADH + (n+1) H(+)(in) = a plastoquinol + NAD(+) + n H(+)(out). The enzyme catalyses a plastoquinone + NADPH + (n+1) H(+)(in) = a plastoquinol + NADP(+) + n H(+)(out). Functionally, NDH shuttles electrons from NAD(P)H:plastoquinone, via FMN and iron-sulfur (Fe-S) centers, to quinones in the photosynthetic chain and possibly in a chloroplast respiratory chain. The immediate electron acceptor for the enzyme in this species is believed to be plastoquinone. Couples the redox reaction to proton translocation, and thus conserves the redox energy in a proton gradient. This Oryza nivara (Indian wild rice) protein is NAD(P)H-quinone oxidoreductase subunit 3, chloroplastic.